The following is an 87-amino-acid chain: Small ribosomal subunit protein uS17 (87 aa).

Belongs to the universal ribosomal protein uS17 family. As to quaternary structure, part of the 30S ribosomal subunit.

In terms of biological role, one of the primary rRNA binding proteins, it binds specifically to the 5'-end of 16S ribosomal RNA. This is Small ribosomal subunit protein uS17 from Oceanobacillus iheyensis (strain DSM 14371 / CIP 107618 / JCM 11309 / KCTC 3954 / HTE831).